A 545-amino-acid polypeptide reads, in one-letter code: Glucose-6-phosphate isomerase (545 aa).

E351 acts as the Proton donor in catalysis. Catalysis depends on residues H382 and K510.

The protein belongs to the GPI family.

The protein resides in the cytoplasm. It carries out the reaction alpha-D-glucose 6-phosphate = beta-D-fructose 6-phosphate. The protein operates within carbohydrate biosynthesis; gluconeogenesis. It participates in carbohydrate degradation; glycolysis; D-glyceraldehyde 3-phosphate and glycerone phosphate from D-glucose: step 2/4. Functionally, catalyzes the reversible isomerization of glucose-6-phosphate to fructose-6-phosphate. This chain is Glucose-6-phosphate isomerase, found in Helicobacter pylori (strain J99 / ATCC 700824) (Campylobacter pylori J99).